A 445-amino-acid chain; its full sequence is MATIHKLFKSPFFDFEFLRLLAMAPYEGAEIGEVLEAAAKIKDQDPESWYSTLLETGGKAEAIAKQAEASGDRVGARRAYLRSSNYLRAAQFMLNEGPIGHDERVLPTLERAIANFRKGVQYRDGKTIFLEIPYEGGKTLPGYLYLPPAARRIPGRKIPILLNSGGGDSTQEEIYFVNPAYGPDLGYAVLTFEGPGQGIVLRRDKLPMRPDWESVTGPVLDHLFDLATRHPELELDLDHIAVTGASMGGYFALRAAADPRIKACVSVDGFYSLSSFVGGRMPGPLFNGFMSGWLSDWMFNGILGVLKKLAFQARWEFNHLRWATGSTTDADVMRSFGAYTLQKADGTEYLADVKCPTLVTGAGASFYFDPATTTDKIYDCLTSLQDGVDKEKWIATDVAYGGLQAKIGAFGYSAQKTFEWLDQRFGIQREPLAASSRLEDLVSRL.

Residue S246 is the Nucleophile of the active site.

Belongs to the AB hydrolase superfamily. FUS2 hydrolase family. As to quaternary structure, homodimer.

The protein operates within secondary metabolite biosynthesis. Functionally, alpha/beta hydrolase; part of the gene cluster that mediates the biosynthesis of pseurotin A, a competitive inhibitor of chitin synthase and an inducer of nerve-cell proliferation. The PKS-NRPS hybrid synthetase psoA is responsible for the biosynthesis of azaspirene, one of the first intermediates having the 1-oxa-7-azaspiro[4,4]-non-2-ene-4,6-dione core of pseurotin, via condensation of one acetyl-CoA, 4 malonyl-CoA, and a L-phenylalanine molecule. The dual-functional monooxygenase/methyltransferase psoF seems to be involved in the addition of the C3 methyl group onto the pseurotin scaffold. Azaspirene is then converted to synerazol through 4 steps including oxidation of C17 by the cytochrome P450 monooxygenase psoD, O-methylation of the hydroxy group of C8 by the methyltransferase psoC, and the trans-to-cis isomerization of the C13 olefin by the glutathione S-transferase psoE. The fourth step of synerazol production is performed by the dual-functional monooxygenase/methyltransferase psoF which seems to catalyze the epoxidation of the intermediate deepoxy-synerazol. Synerazol can be attacked by a water molecule nonenzymatically at two different positions to yield two diol products, pseurotin A and pseurotin D. The chain is Alpha/beta hydrolase psoB from Aspergillus fumigatus (strain ATCC MYA-4609 / CBS 101355 / FGSC A1100 / Af293) (Neosartorya fumigata).